A 186-amino-acid chain; its full sequence is ATP synthase subunit delta (186 aa).

Belongs to the ATPase delta chain family. F-type ATPases have 2 components, F(1) - the catalytic core - and F(0) - the membrane proton channel. F(1) has five subunits: alpha(3), beta(3), gamma(1), delta(1), epsilon(1). F(0) has three main subunits: a(1), b(2) and c(10-14). The alpha and beta chains form an alternating ring which encloses part of the gamma chain. F(1) is attached to F(0) by a central stalk formed by the gamma and epsilon chains, while a peripheral stalk is formed by the delta and b chains.

It is found in the cell inner membrane. Functionally, f(1)F(0) ATP synthase produces ATP from ADP in the presence of a proton or sodium gradient. F-type ATPases consist of two structural domains, F(1) containing the extramembraneous catalytic core and F(0) containing the membrane proton channel, linked together by a central stalk and a peripheral stalk. During catalysis, ATP synthesis in the catalytic domain of F(1) is coupled via a rotary mechanism of the central stalk subunits to proton translocation. Its function is as follows. This protein is part of the stalk that links CF(0) to CF(1). It either transmits conformational changes from CF(0) to CF(1) or is implicated in proton conduction. This Bradyrhizobium diazoefficiens (strain JCM 10833 / BCRC 13528 / IAM 13628 / NBRC 14792 / USDA 110) protein is ATP synthase subunit delta.